The sequence spans 185 residues: ATP synthase subunit delta (185 aa).

It belongs to the ATPase delta chain family. F-type ATPases have 2 components, F(1) - the catalytic core - and F(0) - the membrane proton channel. F(1) has five subunits: alpha(3), beta(3), gamma(1), delta(1), epsilon(1). CF(0) has four main subunits: a(1), b(1), b'(1) and c(10-14). The alpha and beta chains form an alternating ring which encloses part of the gamma chain. F(1) is attached to F(0) by a central stalk formed by the gamma and epsilon chains, while a peripheral stalk is formed by the delta, b and b' chains.

Its subcellular location is the cell inner membrane. Functionally, f(1)F(0) ATP synthase produces ATP from ADP in the presence of a proton or sodium gradient. F-type ATPases consist of two structural domains, F(1) containing the extramembraneous catalytic core and F(0) containing the membrane proton channel, linked together by a central stalk and a peripheral stalk. During catalysis, ATP synthesis in the catalytic domain of F(1) is coupled via a rotary mechanism of the central stalk subunits to proton translocation. In terms of biological role, this protein is part of the stalk that links CF(0) to CF(1). It either transmits conformational changes from CF(0) to CF(1) or is implicated in proton conduction. The polypeptide is ATP synthase subunit delta (Gloeobacter violaceus (strain ATCC 29082 / PCC 7421)).